Here is a 497-residue protein sequence, read N- to C-terminus: Glycerol kinase 2 (497 aa).

Thr13 contacts ADP. Residues Thr13, Thr14, and Ser15 each coordinate ATP. Position 13 (Thr13) interacts with sn-glycerol 3-phosphate. ADP is bound at residue Arg17. Residues Arg83, Glu84, Tyr134, and Asp241 each coordinate sn-glycerol 3-phosphate. Glycerol is bound by residues Arg83, Glu84, Tyr134, Asp241, and Gln242. ADP-binding residues include Thr263 and Gly305. Residues Thr263, Gly305, Gln309, and Gly406 each coordinate ATP. Residues Gly406 and Asn410 each contribute to the ADP site.

Belongs to the FGGY kinase family.

It catalyses the reaction glycerol + ATP = sn-glycerol 3-phosphate + ADP + H(+). Its pathway is polyol metabolism; glycerol degradation via glycerol kinase pathway; sn-glycerol 3-phosphate from glycerol: step 1/1. Key enzyme in the regulation of glycerol uptake and metabolism. Catalyzes the phosphorylation of glycerol to yield sn-glycerol 3-phosphate. This is Glycerol kinase 2 from Sulfolobus acidocaldarius (strain ATCC 33909 / DSM 639 / JCM 8929 / NBRC 15157 / NCIMB 11770).